The chain runs to 361 residues: Chorismate synthase (361 aa).

Position 48 (Arg-48) interacts with NADP(+). FMN is bound by residues 125–127 (RSS), 238–239 (NA), Gly-278, 293–297 (KPTSS), and Arg-319.

This sequence belongs to the chorismate synthase family. In terms of assembly, homotetramer. The cofactor is FMNH2.

It catalyses the reaction 5-O-(1-carboxyvinyl)-3-phosphoshikimate = chorismate + phosphate. Its pathway is metabolic intermediate biosynthesis; chorismate biosynthesis; chorismate from D-erythrose 4-phosphate and phosphoenolpyruvate: step 7/7. Catalyzes the anti-1,4-elimination of the C-3 phosphate and the C-6 proR hydrogen from 5-enolpyruvylshikimate-3-phosphate (EPSP) to yield chorismate, which is the branch point compound that serves as the starting substrate for the three terminal pathways of aromatic amino acid biosynthesis. This reaction introduces a second double bond into the aromatic ring system. The polypeptide is Chorismate synthase (Vibrio anguillarum (strain ATCC 68554 / 775) (Listonella anguillarum)).